A 388-amino-acid chain; its full sequence is Chorismate synthase (388 aa).

Positions 39 and 45 each coordinate NADP(+). FMN is bound by residues 130 to 132 (RSS), 251 to 252 (NA), Gly-296, 311 to 315 (KPIPT), and Arg-337.

Belongs to the chorismate synthase family. As to quaternary structure, homotetramer. The cofactor is FMNH2.

The catalysed reaction is 5-O-(1-carboxyvinyl)-3-phosphoshikimate = chorismate + phosphate. It functions in the pathway metabolic intermediate biosynthesis; chorismate biosynthesis; chorismate from D-erythrose 4-phosphate and phosphoenolpyruvate: step 7/7. Functionally, catalyzes the anti-1,4-elimination of the C-3 phosphate and the C-6 proR hydrogen from 5-enolpyruvylshikimate-3-phosphate (EPSP) to yield chorismate, which is the branch point compound that serves as the starting substrate for the three terminal pathways of aromatic amino acid biosynthesis. This reaction introduces a second double bond into the aromatic ring system. The chain is Chorismate synthase from Streptococcus pyogenes serotype M3 (strain SSI-1).